The sequence spans 141 residues: Hemoglobin subunit alpha-A (141 aa).

A Globin domain is found at 1–141 (VLSAADKNNV…VGTVLTAKYR (141 aa)). His-58 contacts O2. His-87 is a binding site for heme b.

It belongs to the globin family. Heterotetramer of two alpha chains and two beta chains. Red blood cells.

Its function is as follows. Involved in oxygen transport from the lung to the various peripheral tissues. The polypeptide is Hemoglobin subunit alpha-A (HBAA) (Phasianus colchicus colchicus (Black-necked pheasant)).